The chain runs to 418 residues: Sialidase-3 (418 aa).

An FRIP motif motif is present at residues 24 to 27 (YRIP). Substrate-binding residues include arginine 25 and arginine 45. Catalysis depends on aspartate 50, which acts as the Proton acceptor. One copy of the BNR 1 repeat lies at 129–140 (LYSEDSGCSWGE). 2 residues coordinate substrate: tyrosine 179 and tyrosine 181. The BNR 2 repeat unit spans residues 201 to 212 (FYSDDLGVTWHC). Glutamate 223 and arginine 243 together coordinate substrate. The BNR 3 repeat unit spans residues 252-263 (AFSTDSGDCFQK). Substrate is bound at residue arginine 339. The active-site Nucleophile is tyrosine 369. Glutamate 386 is a catalytic residue.

This sequence belongs to the glycosyl hydrolase 33 family. In terms of assembly, interacts with CAV1; this interaction enhances NEU3 sialidase activity within caveola. Interacts with EGFR; this interaction mediates desialylation of EGFR enhancing downstream signaling. Palmitoylated; may regulate intracellular trafficking and anchorage to plasma membrane and endomembranes. In terms of tissue distribution, expressed in brain, cardiac muscle and weakly in liver.

It is found in the cell membrane. Its subcellular location is the membrane. It localises to the caveola. The protein resides in the early endosome membrane. The protein localises to the recycling endosome membrane. It is found in the lysosome membrane. It catalyses the reaction Hydrolysis of alpha-(2-&gt;3)-, alpha-(2-&gt;6)-, alpha-(2-&gt;8)- glycosidic linkages of terminal sialic acid residues in oligosaccharides, glycoproteins, glycolipids, colominic acid and synthetic substrates.. It carries out the reaction a ganglioside GD1a + H2O = a ganglioside GM1 + N-acetylneuraminate. The catalysed reaction is a ganglioside GD1a (d18:1(4E)) + H2O = a ganglioside GM1 (d18:1(4E)) + N-acetylneuraminate. The enzyme catalyses a ganglioside GD1b + H2O = a ganglioside GM1 + N-acetylneuraminate. It catalyses the reaction a ganglioside GD1b (d18:1(4E)) + H2O = a ganglioside GM1 (d18:1(4E)) + N-acetylneuraminate. It carries out the reaction a ganglioside GD3 + H2O = a ganglioside GM3 + N-acetylneuraminate. The catalysed reaction is a ganglioside GD3 (d18:1(4E)) + H2O = a ganglioside GM3 (d18:1(4E)) + N-acetylneuraminate. The enzyme catalyses a ganglioside GM3 + H2O = a beta-D-galactosyl-(1-&gt;4)-beta-D-glucosyl-(1&lt;-&gt;1)-ceramide + N-acetylneuraminate. It catalyses the reaction a ganglioside GM1 + H2O = a ganglioside GA1 + N-acetylneuraminate. It carries out the reaction a ganglioside GM1 (d18:1(4E)) + H2O = a ganglioside GA1 (d18:1(4E)) + N-acetylneuraminate. The catalysed reaction is a ganglioside GM2 (d18:1(4E)) + H2O = a ganglioside GA2 (d18:1(4E)) + N-acetylneuraminate. The enzyme catalyses a ganglioside GM3 (d18:1(4E)) + H2O = a beta-D-Gal-(1-&gt;4)-beta-D-Glc-(1&lt;-&gt;1)-Cer(d18:1(4E)) + N-acetylneuraminate. It catalyses the reaction a ganglioside GT1b + H2O = a ganglioside GD1b + N-acetylneuraminate. In terms of biological role, exo-alpha-sialidase that catalyzes the hydrolytic cleavage of the terminal sialic acid (N-acetylneuraminic acid, Neu5Ac) of a glycan moiety in the catabolism of glycolipids, glycoproteins and oligosacharides. Displays high catalytic efficiency for gangliosides including alpha-(2-&gt;3)-sialylated GD1a and GM3 and alpha-(2-&gt;8)-sialylated GD3. Plays a role in the regulation of transmembrane signaling through the modulation of ganglioside content of the lipid bilayer and by direct interaction with signaling receptors, such as EGFR. Desialylates EGFR and activates downstream signaling in proliferating cells. Contributes to clathrin-mediated endocytosis by regulating sorting of endocytosed receptors to early and recycling endosomes. In Rattus norvegicus (Rat), this protein is Sialidase-3 (Neu3).